A 338-amino-acid chain; its full sequence is Heat-inducible transcription repressor HrcA (338 aa).

It belongs to the HrcA family.

In terms of biological role, negative regulator of class I heat shock genes (grpE-dnaK-dnaJ and groELS operons). Prevents heat-shock induction of these operons. This chain is Heat-inducible transcription repressor HrcA, found in Thermotoga sp. (strain RQ2).